Here is a 419-residue protein sequence, read N- to C-terminus: tRNA modification GTPase MnmE (419 aa).

Arg-20, Glu-76, and Arg-115 together coordinate (6S)-5-formyl-5,6,7,8-tetrahydrofolate. Positions 211-348 constitute a TrmE-type G domain; sequence GYEVAIIGPP…LLDLVYDRLR (138 aa). Asn-221 lines the K(+) pocket. GTP-binding positions include 221–226, 240–246, and 265–268; these read NAGKST, SEIAGTT, and DTAG. Mg(2+) is bound at residue Ser-225. 3 residues coordinate K(+): Ser-240, Ile-242, and Thr-245. Thr-246 contacts Mg(2+). A (6S)-5-formyl-5,6,7,8-tetrahydrofolate-binding site is contributed by Lys-419.

This sequence belongs to the TRAFAC class TrmE-Era-EngA-EngB-Septin-like GTPase superfamily. TrmE GTPase family. As to quaternary structure, homodimer. Heterotetramer of two MnmE and two MnmG subunits. K(+) serves as cofactor.

It is found in the cytoplasm. Its function is as follows. Exhibits a very high intrinsic GTPase hydrolysis rate. Involved in the addition of a carboxymethylaminomethyl (cmnm) group at the wobble position (U34) of certain tRNAs, forming tRNA-cmnm(5)s(2)U34. In Paracoccus denitrificans (strain Pd 1222), this protein is tRNA modification GTPase MnmE.